We begin with the raw amino-acid sequence, 95 residues long: MRKYEVMYIIRPTVDDEAKKAVIERFNNVLTSNGAEITGTKDWGKRRLAYEINDFREGFYQIVNVQSDAAAVQEFDRLAKISDDIIRHIVVKEEV.

Belongs to the bacterial ribosomal protein bS6 family.

Binds together with bS18 to 16S ribosomal RNA. The sequence is that of Small ribosomal subunit protein bS6 from Bacillus pumilus (strain SAFR-032).